The chain runs to 210 residues: Thymidylate kinase (210 aa).

10-17 (GLEGAGKS) serves as a coordination point for ATP.

Belongs to the thymidylate kinase family.

The enzyme catalyses dTMP + ATP = dTDP + ADP. In terms of biological role, phosphorylation of dTMP to form dTDP in both de novo and salvage pathways of dTTP synthesis. This is Thymidylate kinase (tmk) from Haemophilus influenzae (strain ATCC 51907 / DSM 11121 / KW20 / Rd).